Here is a 69-residue protein sequence, read N- to C-terminus: Small, acid-soluble spore protein 1 (69 aa).

This sequence belongs to the alpha/beta-type SASP family.

SASP are bound to spore DNA. They are double-stranded DNA-binding proteins that cause DNA to change to an a-like conformation. They protect the DNA backbone from chemical and enzymatic cleavage and are thus involved in dormant spore's high resistance to UV light. The chain is Small, acid-soluble spore protein 1 (Su-1) from Sporosarcina ureae.